We begin with the raw amino-acid sequence, 437 residues long: MTNWLLLIVCLSIACQDVTSAIHQRKSSKNLEHSMNVIHEWKYIDYDFGSDEKRQAAIQSGEYDYTKNYPFDVDQWHNKTFLAVIRYDGVPSSLNVISEKIGNGGCLLQPYPDWSWANYKDCSGIVSAYKIAIDKFDRLWVLDSGLINNIQLMCSPKLLAFDLNTSKLLKQIEIPHNIAVNASTGMGGPVSLVVQAMDPMNTTVYIADDRGDALIIYQNSDDSFHRLTSKTFDNDLRYSELAVAGESFTVHDGIFGMALSPVTNNLYYSPLTSHSLYYVNMEPFMKSQYEENNIEYEGIQDIFNTQSSAKVMSKNGVLFFGLVNNSAIGCWNEHQPLQRQNMDMVAQNEKTLQMIISVKIIQNLAYSGRMNRIHKNEYMLALSNRMQKIVNNDFNFDEVNFRILGANVNNLIKNTRCAKSNNQNNNQNKYKNQAHLD.

Positions 1 to 20 (MTNWLLLIVCLSIACQDVTS) are cleaved as a signal peptide. Residues Asn78, Asn164, Asn181, Asn201, and Asn324 are each glycosylated (N-linked (GlcNAc...) asparagine).

It belongs to the major royal jelly protein family. Found in and secreted from the hypopharyngeal glands of the worker honey bee (at protein level); expression peaks at 20 days post eclosion. Expressed in the spermatheca of adult queen bees (at protein level); Expression levels are higher in mated queens than in virgin queens. Expressed at low level in the brains of adult worker bees. Protein abundance does not seem to correlate with transcript abundance.

The protein resides in the secreted. Component of royal jelly, a substance produced in the hypopharyngeal gland containing proteins, free amino acids, fatty acids, sugars and other nutrients, which is fed to developing larvae by worker nurse bees. All larvae are fed some royal jelly (also known as worker jelly) early in their development but it forms the principal source of nutrition for larvae destined to become queen bees. Produced in the spermatheca of adult queen bees, along with other major royal jelly proteins, where it may act as a nutrient supply for sperm stored by mated queens, or be involved in energy metabolism. The sequence is that of Major royal jelly protein 6 from Apis mellifera (Honeybee).